The primary structure comprises 370 residues: MTCQAFASSDNFVPLNSDSSPSLPLIMHHSAAECLPVSNHATSVVSTVPSVLSLIQTPKCSHLHFAMMTSGNVSAGLHYSVPSCHYGNQTSTYGVMTGIKPATPEMLSASLSQSRILQTCSMPHPNVVNGVSTLQSKSFSFSCSLTPCLYKFPEHALSASSCALGHSFTPMHQTLLSDDPTAADFKQEFRRKSKSVEEPVDMDSPEIRELEKFANEFKLRRIKLGYTQTNVGEALAAVHGSEFSQTTICRFENSQLSFKNACKLKSILSKWLEEAEQVGALYNEKVGVNERKRKRRTTISIAAKEALERHFGEQSKPSSQEIMRMAEGLNLEKEVVRVWFCNRRQREKRVKTSLHQNAFSSIIKEHHECR.

The short motif at 5 to 13 is the 9aaTAD element; that stretch reads AFASSDNFV. Residues 202–276 form the POU-specific domain; sequence MDSPEIRELE…ILSKWLEEAE (75 aa). A DNA-binding region (homeobox) is located at residues 292 to 351; it reads KRKRRTTISIAAKEALERHFGEQSKPSSQEIMRMAEGLNLEKEVVRVWFCNRRQREKRVK.

This sequence belongs to the POU transcription factor family. Class-1 subfamily. In terms of tissue distribution, pituitary gland.

It is found in the nucleus. In terms of biological role, transcription factor that activates growth hormone and prolactin genes. Specifically binds to the consensus sequence 5'-TAAAT-3'. This chain is Pituitary-specific positive transcription factor 1 (POU1F1), found in Meleagris gallopavo (Wild turkey).